Consider the following 202-residue polypeptide: Virulence protein F (202 aa).

Residues 1-15 (MRNSSLRDASGSNDA) show a composition bias toward polar residues. The segment at 1–21 (MRNSSLRDASGSNDAQVPHKT) is disordered. The 23-residue stretch at 20–42 (KTELLNLPDHVLTEVAKRLATNN) folds into the F-box domain.

As to quaternary structure, component of SCF(virF) E3 ubiquitin ligase complexes. Interacts with host VIP1 and SKP1A. Interacts with Arabidopsis thaliana ENAP1/VFP3 and VFP5 in the host cell nucleus.

It localises to the host nucleus. In the host plant, component of SCF(virF) E3 ubiquitin ligase complexes, which mediate the ubiquitination and subsequent proteasomal degradation of target proteins such as the host VIP1, after its implication in T-DNA translocation to the host nucleus. Required for the formation of tumors of a wild-type size on certain plant species only. This Agrobacterium tumefaciens (strain 15955) protein is Virulence protein F.